A 145-amino-acid chain; its full sequence is D-aminoacyl-tRNA deacylase (145 aa).

The Gly-cisPro motif, important for rejection of L-amino acids motif lies at 137 to 138 (GP).

It belongs to the DTD family. Homodimer.

It is found in the cytoplasm. The enzyme catalyses glycyl-tRNA(Ala) + H2O = tRNA(Ala) + glycine + H(+). The catalysed reaction is a D-aminoacyl-tRNA + H2O = a tRNA + a D-alpha-amino acid + H(+). An aminoacyl-tRNA editing enzyme that deacylates mischarged D-aminoacyl-tRNAs. Also deacylates mischarged glycyl-tRNA(Ala), protecting cells against glycine mischarging by AlaRS. Acts via tRNA-based rather than protein-based catalysis; rejects L-amino acids rather than detecting D-amino acids in the active site. By recycling D-aminoacyl-tRNA to D-amino acids and free tRNA molecules, this enzyme counteracts the toxicity associated with the formation of D-aminoacyl-tRNA entities in vivo and helps enforce protein L-homochirality. This Cronobacter sakazakii (strain ATCC BAA-894) (Enterobacter sakazakii) protein is D-aminoacyl-tRNA deacylase.